The primary structure comprises 230 residues: Large ribosomal subunit protein uL1 (230 aa).

The protein belongs to the universal ribosomal protein uL1 family. As to quaternary structure, part of the 50S ribosomal subunit.

Its function is as follows. Binds directly to 23S rRNA. The L1 stalk is quite mobile in the ribosome, and is involved in E site tRNA release. Protein L1 is also a translational repressor protein, it controls the translation of the L11 operon by binding to its mRNA. This Nitrosospira multiformis (strain ATCC 25196 / NCIMB 11849 / C 71) protein is Large ribosomal subunit protein uL1.